Reading from the N-terminus, the 293-residue chain is uncharacterized protein (293 aa).

Positions 1–58 constitute an HTH lysR-type domain; the sequence is MELKQLITFITAAEHVNFTLTAKMLNYAQSSVTSQIKSLEEEIGTPLFERLGKRLILT. A DNA-binding region (H-T-H motif) is located at residues 18 to 37; sequence FTLTAKMLNYAQSSVTSQIK.

It belongs to the LysR transcriptional regulatory family.

The protein localises to the cytoplasm. This is an uncharacterized protein from Bacillus subtilis (strain 168).